The following is a 316-amino-acid chain: Probable cell division protein WhiA (316 aa).

Residues 280–313 (SLKELGEMLEPPVGKSGVNHRLRKIEKIAEELRT) constitute a DNA-binding region (H-T-H motif).

The protein belongs to the WhiA family.

Functionally, involved in cell division and chromosome segregation. This Clostridium perfringens (strain ATCC 13124 / DSM 756 / JCM 1290 / NCIMB 6125 / NCTC 8237 / Type A) protein is Probable cell division protein WhiA.